The chain runs to 347 residues: NADH-ubiquinone oxidoreductase chain 2 (347 aa).

Helical transmembrane passes span 1-21 (MNPLTFAMILLTIMLGTTIVM), 25-45 (HWLVVWIGFEMNMLAVIPVLM), 59-79 (YFLTQATASMLLMLAIVINLI), 96-116 (IIMTLALAMKLGLAPFHFWVP), 122-142 (IQLSSGLILLTWQKLAPISIL), 150-170 (NLNLLLAMSILSVAIGGWGGL), 201-221 (ALLNLVIYILLTTTTFSVFML), 242-262 (TALLMTMLSLGGLPPLSGFLP), 274-294 (NSVIVPTTMAITALLNLYFYM), and 326-346 (LSPLIILSTLILPLSPILTLL).

This sequence belongs to the complex I subunit 2 family. Core subunit of respiratory chain NADH dehydrogenase (Complex I) which is composed of 45 different subunits. Interacts with TMEM242.

It is found in the mitochondrion inner membrane. It catalyses the reaction a ubiquinone + NADH + 5 H(+)(in) = a ubiquinol + NAD(+) + 4 H(+)(out). Its function is as follows. Core subunit of the mitochondrial membrane respiratory chain NADH dehydrogenase (Complex I) which catalyzes electron transfer from NADH through the respiratory chain, using ubiquinone as an electron acceptor. Essential for the catalytic activity and assembly of complex I. This chain is NADH-ubiquinone oxidoreductase chain 2, found in Eidolon helvum (Straw-colored fruit bat).